The following is a 344-amino-acid chain: Dihydroorotase (344 aa).

Positions 14 and 16 each coordinate Zn(2+). Substrate-binding positions include 16 to 18 and N42; that span reads HLR. 3 residues coordinate Zn(2+): K100, H137, and H175. K100 is modified (N6-carboxylysine). Residue H137 participates in substrate binding. L220 contacts substrate. Residue D248 coordinates Zn(2+). Residue D248 is part of the active site. H252 and A264 together coordinate substrate.

It belongs to the metallo-dependent hydrolases superfamily. DHOase family. Class II DHOase subfamily. In terms of assembly, homodimer. Requires Zn(2+) as cofactor.

The enzyme catalyses (S)-dihydroorotate + H2O = N-carbamoyl-L-aspartate + H(+). The protein operates within pyrimidine metabolism; UMP biosynthesis via de novo pathway; (S)-dihydroorotate from bicarbonate: step 3/3. Its function is as follows. Catalyzes the reversible cyclization of carbamoyl aspartate to dihydroorotate. The polypeptide is Dihydroorotase (Cupriavidus necator (strain ATCC 17699 / DSM 428 / KCTC 22496 / NCIMB 10442 / H16 / Stanier 337) (Ralstonia eutropha)).